Here is an 85-residue protein sequence, read N- to C-terminus: RNA-binding protein Hfq (85 aa).

One can recognise a Sm domain in the interval 10 to 70; that stretch reads DAFLNQVRKE…ISTIIPQRPV (61 aa).

It belongs to the Hfq family. In terms of assembly, homohexamer.

RNA chaperone that binds small regulatory RNA (sRNAs) and mRNAs to facilitate mRNA translational regulation in response to envelope stress, environmental stress and changes in metabolite concentrations. Also binds with high specificity to tRNAs. This is RNA-binding protein Hfq from Carboxydothermus hydrogenoformans (strain ATCC BAA-161 / DSM 6008 / Z-2901).